A 232-amino-acid polypeptide reads, in one-letter code: Large ribosomal subunit protein uL1 (232 aa).

This sequence belongs to the universal ribosomal protein uL1 family. As to quaternary structure, part of the 50S ribosomal subunit.

Its function is as follows. Binds directly to 23S rRNA. The L1 stalk is quite mobile in the ribosome, and is involved in E site tRNA release. Protein L1 is also a translational repressor protein, it controls the translation of the L11 operon by binding to its mRNA. The polypeptide is Large ribosomal subunit protein uL1 (Lysinibacillus sphaericus (strain C3-41)).